We begin with the raw amino-acid sequence, 234 residues long: Large ribosomal subunit protein uL1 (234 aa).

This sequence belongs to the universal ribosomal protein uL1 family. As to quaternary structure, part of the 50S ribosomal subunit.

Functionally, binds directly to 23S rRNA. The L1 stalk is quite mobile in the ribosome, and is involved in E site tRNA release. In terms of biological role, protein L1 is also a translational repressor protein, it controls the translation of the L11 operon by binding to its mRNA. The polypeptide is Large ribosomal subunit protein uL1 (Helicobacter pylori (strain Shi470)).